Here is a 372-residue protein sequence, read N- to C-terminus: Probable arabinan endo-1,5-alpha-L-arabinosidase B (372 aa).

The first 16 residues, 1-16 (MTVLVALFCLVTWTLC), serve as a signal peptide directing secretion. The segment covering 23-34 (STQGTQQPQQPE) has biased composition (low complexity). A disordered region spans residues 23–52 (STQGTQQPQQPEKTPHPHPQPEDAFPPTHA). The Proton acceptor role is filled by Asp-59. Asn-120 is a glycosylation site (N-linked (GlcNAc...) asparagine). Glu-252 serves as the catalytic Proton donor. An N-linked (GlcNAc...) asparagine glycan is attached at Asn-363.

It belongs to the glycosyl hydrolase 43 family.

The protein localises to the secreted. The enzyme catalyses Endohydrolysis of (1-&gt;5)-alpha-arabinofuranosidic linkages in (1-&gt;5)-arabinans.. The protein operates within glycan metabolism; L-arabinan degradation. Its function is as follows. Endo-1,5-alpha-L-arabinanase involved in degradation of pectin. Its preferred substrate is linear 1,5-alpha-L-arabinan. In Aspergillus fumigatus (strain ATCC MYA-4609 / CBS 101355 / FGSC A1100 / Af293) (Neosartorya fumigata), this protein is Probable arabinan endo-1,5-alpha-L-arabinosidase B (abnB).